Here is a 755-residue protein sequence, read N- to C-terminus: ABC transporter G family member 2 (755 aa).

The region spanning 98–358 is the ABC transporter domain; sequence LSFTDLTYSV…FSEFKHPIPE (261 aa). An ATP-binding site is contributed by 151–158; it reads GASGSGKS. Positions 449–659 constitute an ABC transmembrane type-2 domain; that stretch reads IEMIVIGKRA…PYEGVLQNEF (211 aa). 6 helical membrane-spanning segments follow: residues 468-488, 503-523, 552-572, 579-599, 609-629, and 728-748; these read LLGM…TMFT, FFAF…PVFL, IPAL…AVGL, FFFF…FVTF, LGFT…GFFI, and LWIT…TLLI.

This sequence belongs to the ABC transporter superfamily. ABCG family. Eye pigment precursor importer (TC 3.A.1.204) subfamily.

It localises to the membrane. This chain is ABC transporter G family member 2 (ABCG2), found in Arabidopsis thaliana (Mouse-ear cress).